The sequence spans 396 residues: Pre-mRNA-splicing regulator WTAP (396 aa).

Met1 bears the N-acetylmethionine mark. Ser14 is subject to Phosphoserine. Low complexity-rich tracts occupy residues 240 to 257, 278 to 291, and 304 to 316; these read QQQQ…TTAS, SNGS…SGSG, and PSSP…SSNS. The disordered stretch occupies residues 240-396; the sequence is QQQQSQASAP…SSVNVQGSVL (157 aa). 3 positions are modified to phosphoserine: Ser305, Ser306, and Ser341. The segment covering 340–356 has biased composition (polar residues); it reads DSPTGSENSLTHQSNDT. Phosphothreonine is present on Thr350. Residues 357 to 368 show a composition bias toward basic and acidic residues; the sequence is DSSHDPQEEKAV. Over residues 380–396 the composition is skewed to polar residues; it reads HVQNGLDSSVNVQGSVL. A Phosphoserine modification is found at Ser388.

It belongs to the fl(2)d family. Component of the WMM complex, a N6-methyltransferase complex composed of a catalytic subcomplex, named MAC, and of an associated subcomplex, named MACOM. The MAC subcomplex is composed of METTL3 and METTL14. The MACOM subcomplex is composed of WTAP, ZC3H13, CBLL1/HAKAI, VIRMA, and, in some cases of RBM15 (RBM15 or RBM15B). Interacts with WT1. Also a component of a MACOM-like complex, named WTAP complex, composed of WTAP, ZC3H13, CBLL1, VIRMA, RBM15, BCLAF1 and THRAP3. Ubiquitously expressed.

It is found in the nucleus speckle. Its subcellular location is the nucleus. The protein resides in the nucleoplasm. The protein localises to the cytoplasm. Associated component of the WMM complex, a complex that mediates N6-methyladenosine (m6A) methylation of RNAs, a modification that plays a role in the efficiency of mRNA splicing and RNA processing. Required for accumulation of METTL3 and METTL14 to nuclear speckle. Acts as a mRNA splicing regulator. Regulates G2/M cell-cycle transition by binding to the 3' UTR of CCNA2, which enhances its stability. Impairs WT1 DNA-binding ability and inhibits expression of WT1 target genes. The sequence is that of Pre-mRNA-splicing regulator WTAP from Homo sapiens (Human).